We begin with the raw amino-acid sequence, 137 residues long: ATP synthase epsilon chain (137 aa).

The protein belongs to the ATPase epsilon chain family. F-type ATPases have 2 components, CF(1) - the catalytic core - and CF(0) - the membrane proton channel. CF(1) has five subunits: alpha(3), beta(3), gamma(1), delta(1), epsilon(1). CF(0) has three main subunits: a, b and c.

Its subcellular location is the cell membrane. Functionally, produces ATP from ADP in the presence of a proton gradient across the membrane. The protein is ATP synthase epsilon chain of Streptococcus agalactiae serotype Ia (strain ATCC 27591 / A909 / CDC SS700).